We begin with the raw amino-acid sequence, 436 residues long: 3-ketoacyl-CoA thiolase (436 aa).

The Acyl-thioester intermediate role is filled by Cys99. Active-site proton acceptor residues include His392 and Cys422.

It belongs to the thiolase-like superfamily. Thiolase family. Heterotetramer of two alpha chains (FadJ) and two beta chains (FadI).

It localises to the cytoplasm. The catalysed reaction is an acyl-CoA + acetyl-CoA = a 3-oxoacyl-CoA + CoA. It functions in the pathway lipid metabolism; fatty acid beta-oxidation. Its function is as follows. Catalyzes the final step of fatty acid oxidation in which acetyl-CoA is released and the CoA ester of a fatty acid two carbons shorter is formed. The polypeptide is 3-ketoacyl-CoA thiolase (Shewanella amazonensis (strain ATCC BAA-1098 / SB2B)).